The following is a 279-amino-acid chain: uncharacterized protein (279 aa).

Positions 1–21 (MKIIRTLFLLLIAVYGSSVVA) are cleaved as a signal peptide.

This sequence to E.coli YfcO.

This is an uncharacterized protein from Salmonella typhimurium (strain LT2 / SGSC1412 / ATCC 700720).